The chain runs to 149 residues: Large ribosomal subunit protein uL16 (149 aa).

This sequence belongs to the universal ribosomal protein uL16 family. Part of the 50S ribosomal subunit.

Functionally, binds 23S rRNA and is also seen to make contacts with the A and possibly P site tRNAs. The chain is Large ribosomal subunit protein uL16 from Dehalococcoides mccartyi (strain ATCC BAA-2100 / JCM 16839 / KCTC 5957 / BAV1).